Reading from the N-terminus, the 495-residue chain is 3-octaprenyl-4-hydroxybenzoate carboxy-lyase (495 aa).

N172 contributes to the Mn(2+) binding site. Prenylated FMN is bound by residues 175–177 (IYR), 189–191 (RWL), and 194–195 (RG). Mn(2+) is bound at residue E238. D287 (proton donor) is an active-site residue.

It belongs to the UbiD family. Homohexamer. Prenylated FMN is required as a cofactor. It depends on Mn(2+) as a cofactor.

It localises to the cell membrane. The catalysed reaction is a 4-hydroxy-3-(all-trans-polyprenyl)benzoate + H(+) = a 2-(all-trans-polyprenyl)phenol + CO2. It participates in cofactor biosynthesis; ubiquinone biosynthesis. Functionally, catalyzes the decarboxylation of 3-octaprenyl-4-hydroxy benzoate to 2-octaprenylphenol, an intermediate step in ubiquinone biosynthesis. In Yersinia enterocolitica serotype O:8 / biotype 1B (strain NCTC 13174 / 8081), this protein is 3-octaprenyl-4-hydroxybenzoate carboxy-lyase.